Here is a 432-residue protein sequence, read N- to C-terminus: Enolase (432 aa).

A (2R)-2-phosphoglycerate-binding site is contributed by Gln167. Glu209 serves as the catalytic Proton donor. The Mg(2+) site is built by Asp246, Glu291, and Asp318. (2R)-2-phosphoglycerate is bound by residues Lys343, Arg372, Ser373, and Lys394. Residue Lys343 is the Proton acceptor of the active site.

The protein belongs to the enolase family. As to quaternary structure, component of the RNA degradosome, a multiprotein complex involved in RNA processing and mRNA degradation. The cofactor is Mg(2+).

It is found in the cytoplasm. The protein localises to the secreted. The protein resides in the cell surface. It carries out the reaction (2R)-2-phosphoglycerate = phosphoenolpyruvate + H2O. The protein operates within carbohydrate degradation; glycolysis; pyruvate from D-glyceraldehyde 3-phosphate: step 4/5. In terms of biological role, catalyzes the reversible conversion of 2-phosphoglycerate (2-PG) into phosphoenolpyruvate (PEP). It is essential for the degradation of carbohydrates via glycolysis. The chain is Enolase from Pseudoalteromonas translucida (strain TAC 125).